We begin with the raw amino-acid sequence, 382 residues long: MKITKITTYRLPPRWMFLKIETDEGVVGWGEPVIEGRARTVEAAVHELSDYLIGQDPSRINDLWQVMYRAGFYRGGPILMSAIAGIDQALWDIKGKVLNAPVWQLMGGLVRDKIKAYSWVGGDRPADVIDGIKTLREIGFDTFKLNGCEELGLIDNSRAVDAAVNTVAQIREAFGNQIEFGLDFHGRVSAPMAKVLIKELEPYRPLFIEEPVLAEQAEYYPKLAAQTHIPLAAGERMFSRFDFKRVLEAGGISILQPDLSHAGGITECYKIAGMAEAYDVTLAPHCPLGPIALAACLHIDFVSYNAVLQEQSMGIHYNKGAELLDFVKNKEDFSMVGGFFKPLMKPGLGVEIDEAKVIEFSKNAPDWRNPLWRHEDNSVAEW.

D183 contacts Mg(2+). The active-site Proton donor is H185. 2 residues coordinate Mg(2+): E209 and E235. H285 functions as the Proton acceptor in the catalytic mechanism.

The protein belongs to the mandelate racemase/muconate lactonizing enzyme family. GalD subfamily. Requires Mg(2+) as cofactor.

The catalysed reaction is D-galactonate = 2-dehydro-3-deoxy-D-galactonate + H2O. It participates in carbohydrate acid metabolism; D-galactonate degradation; D-glyceraldehyde 3-phosphate and pyruvate from D-galactonate: step 1/3. In terms of biological role, catalyzes the dehydration of D-galactonate to 2-keto-3-deoxy-D-galactonate. This Escherichia fergusonii (strain ATCC 35469 / DSM 13698 / CCUG 18766 / IAM 14443 / JCM 21226 / LMG 7866 / NBRC 102419 / NCTC 12128 / CDC 0568-73) protein is D-galactonate dehydratase.